A 264-amino-acid polypeptide reads, in one-letter code: Probable metallo-hydrolase YflN (264 aa).

Residues His80, His82, Asp84, His85, His169, Asp188, and His241 each coordinate Zn(2+).

It belongs to the metallo-beta-lactamase superfamily. The cofactor is Zn(2+).

The sequence is that of Probable metallo-hydrolase YflN (yflN) from Bacillus subtilis (strain 168).